The primary structure comprises 366 residues: Ribosomal RNA large subunit methyltransferase M (366 aa).

S-adenosyl-L-methionine is bound by residues Ser-188, 221–224 (CPGG), Asp-240, Asp-260, and Asp-277. Catalysis depends on Lys-306, which acts as the Proton acceptor.

Belongs to the class I-like SAM-binding methyltransferase superfamily. RNA methyltransferase RlmE family. RlmM subfamily. As to quaternary structure, monomer.

It is found in the cytoplasm. The catalysed reaction is cytidine(2498) in 23S rRNA + S-adenosyl-L-methionine = 2'-O-methylcytidine(2498) in 23S rRNA + S-adenosyl-L-homocysteine + H(+). In terms of biological role, catalyzes the 2'-O-methylation at nucleotide C2498 in 23S rRNA. This chain is Ribosomal RNA large subunit methyltransferase M, found in Musicola paradisiaca (strain Ech703) (Dickeya paradisiaca).